Here is a 407-residue protein sequence, read N- to C-terminus: Phosphopentomutase (407 aa).

Residues D10, D306, H311, D347, H348, and H359 each coordinate Mn(2+).

The protein belongs to the phosphopentomutase family. The cofactor is Mn(2+).

The protein resides in the cytoplasm. It catalyses the reaction 2-deoxy-alpha-D-ribose 1-phosphate = 2-deoxy-D-ribose 5-phosphate. The enzyme catalyses alpha-D-ribose 1-phosphate = D-ribose 5-phosphate. The protein operates within carbohydrate degradation; 2-deoxy-D-ribose 1-phosphate degradation; D-glyceraldehyde 3-phosphate and acetaldehyde from 2-deoxy-alpha-D-ribose 1-phosphate: step 1/2. Its function is as follows. Isomerase that catalyzes the conversion of deoxy-ribose 1-phosphate (dRib-1-P) and ribose 1-phosphate (Rib-1-P) to deoxy-ribose 5-phosphate (dRib-5-P) and ribose 5-phosphate (Rib-5-P), respectively. The chain is Phosphopentomutase from Edwardsiella ictaluri (strain 93-146).